Consider the following 506-residue polypeptide: Aluminum-activated malate transporter 7 (506 aa).

6 helical membrane-spanning segments follow: residues 28–48 (VGLVLALVSSFYYYQPLYDSF), 52–72 (AMWAVMTVVVVFEFSVGATLG), 78–98 (VAATLFAGGLGIGAHHLASMS), 104–124 (PILLAVFVFVQAALSTFVRFF), 130–150 (RYDYSLLIFILTFALISVSGF), and 166–186 (VIIGGLSCVIISIFVCPVWAG). A disordered region spans residues 461 to 485 (DDGNNDDTSKNDNGSKEVSIHEKHE). Residues 467–485 (DTSKNDNGSKEVSIHEKHE) are compositionally biased toward basic and acidic residues.

Belongs to the aromatic acid exporter (TC 2.A.85) family.

Its subcellular location is the membrane. Malate transporter. This chain is Aluminum-activated malate transporter 7 (ALMT7), found in Arabidopsis thaliana (Mouse-ear cress).